The chain runs to 308 residues: Protein translocase subunit SecF (308 aa).

6 helical membrane passes run 10-30, 129-149, 160-180, 181-201, 241-261, and 264-284; these read LFFA…AIFG, LAVS…FRGV, IIAM…GGVL, FGWQ…GFSV, TQLM…GITL, and FAII…FIAA.

This sequence belongs to the SecD/SecF family. SecF subfamily. As to quaternary structure, forms a complex with SecD. Part of the essential Sec protein translocation apparatus which comprises SecA, SecYEG and auxiliary proteins SecDF. Other proteins may also be involved.

The protein localises to the cell membrane. Functionally, part of the Sec protein translocase complex. Interacts with the SecYEG preprotein conducting channel. SecDF uses the proton motive force (PMF) to complete protein translocation after the ATP-dependent function of SecA. In Anaerolinea thermophila (strain DSM 14523 / JCM 11388 / NBRC 100420 / UNI-1), this protein is Protein translocase subunit SecF.